Here is a 242-residue protein sequence, read N- to C-terminus: MQRRVPLSPDAAHCSSCMLGHVCVPVGMPANEVEKLDELVKERVRVERGKTLYELDDPLDAVYGVRFGSLKTQLEDSSGQLQITGFHLPGEIVGLDGMIESKHVSSAVALEDSEVCVIRLPEIDRVSTQLPSLQQQFRRLMSREITRSHQMLATVGAMRSEQRLAAFLLNLSQRYAALGYSSTEFVLRMSREEIGNYLGLTLETVSRLFSRFGREGLIRINQREVRLIDLPGLKQLIGQESC.

The 74-residue stretch at 158 to 231 (MRSEQRLAAF…QREVRLIDLP (74 aa)) folds into the HTH crp-type domain. A DNA-binding region (H-T-H motif) is located at residues 191–210 (REEIGNYLGLTLETVSRLFS).

Functionally, may regulate gene expression in response to changes in oxygen levels or to changes in the redox potential of the bacterial environment. The polypeptide is Transcriptional regulatory protein btr (btr) (Bordetella pertussis (strain Tohama I / ATCC BAA-589 / NCTC 13251)).